The primary structure comprises 454 residues: Bifunctional protein GlmU (454 aa).

A pyrophosphorylase region spans residues Met1 to Arg227. UDP-N-acetyl-alpha-D-glucosamine-binding positions include Leu9–Gly12, Lys23, Gln74, Gly79–Thr80, Tyr101–Asp103, Gly138, Glu152, Asn167, and Asn225. A Mg(2+)-binding site is contributed by Asp103. Asn225 contacts Mg(2+). The tract at residues Leu228–Ala248 is linker. The interval Gly249–Lys454 is N-acetyltransferase. Positions 331 and 349 each coordinate UDP-N-acetyl-alpha-D-glucosamine. His361 acts as the Proton acceptor in catalysis. UDP-N-acetyl-alpha-D-glucosamine contacts are provided by Tyr364 and Asn375. Residues Ala378, Asn384 to Tyr385, Ser403, Ala421, and Arg438 contribute to the acetyl-CoA site.

The protein in the N-terminal section; belongs to the N-acetylglucosamine-1-phosphate uridyltransferase family. In the C-terminal section; belongs to the transferase hexapeptide repeat family. As to quaternary structure, homotrimer. Requires Mg(2+) as cofactor.

Its subcellular location is the cytoplasm. It catalyses the reaction alpha-D-glucosamine 1-phosphate + acetyl-CoA = N-acetyl-alpha-D-glucosamine 1-phosphate + CoA + H(+). It carries out the reaction N-acetyl-alpha-D-glucosamine 1-phosphate + UTP + H(+) = UDP-N-acetyl-alpha-D-glucosamine + diphosphate. Its pathway is nucleotide-sugar biosynthesis; UDP-N-acetyl-alpha-D-glucosamine biosynthesis; N-acetyl-alpha-D-glucosamine 1-phosphate from alpha-D-glucosamine 6-phosphate (route II): step 2/2. The protein operates within nucleotide-sugar biosynthesis; UDP-N-acetyl-alpha-D-glucosamine biosynthesis; UDP-N-acetyl-alpha-D-glucosamine from N-acetyl-alpha-D-glucosamine 1-phosphate: step 1/1. It participates in bacterial outer membrane biogenesis; LPS lipid A biosynthesis. Catalyzes the last two sequential reactions in the de novo biosynthetic pathway for UDP-N-acetylglucosamine (UDP-GlcNAc). The C-terminal domain catalyzes the transfer of acetyl group from acetyl coenzyme A to glucosamine-1-phosphate (GlcN-1-P) to produce N-acetylglucosamine-1-phosphate (GlcNAc-1-P), which is converted into UDP-GlcNAc by the transfer of uridine 5-monophosphate (from uridine 5-triphosphate), a reaction catalyzed by the N-terminal domain. This Actinobacillus pleuropneumoniae serotype 7 (strain AP76) protein is Bifunctional protein GlmU.